The sequence spans 466 residues: Eukaryotic translation initiation factor 3 subunit M (466 aa).

Residues 40 to 62 (EISPLLEPLRQQEQSDAEPDRKQ) form a disordered region. A PCI domain is found at 211 to 378 (AQTHILQALQ…SEFLVHRATY (168 aa)). The tract at residues 424–466 (AAEEAAQGKSNDKGNKSGDRRQRHGNNQQSQQQQQPQEVAAAE) is disordered. Positions 433 to 443 (SNDKGNKSGDR) are enriched in basic and acidic residues. The span at 451-460 (QQSQQQQQPQ) shows a compositional bias: low complexity.

The protein belongs to the eIF-3 subunit M family. In terms of assembly, component of the eukaryotic translation initiation factor 3 (eIF-3) complex.

It is found in the cytoplasm. In terms of biological role, component of the eukaryotic translation initiation factor 3 (eIF-3) complex, which is involved in protein synthesis of a specialized repertoire of mRNAs and, together with other initiation factors, stimulates binding of mRNA and methionyl-tRNAi to the 40S ribosome. The eIF-3 complex specifically targets and initiates translation of a subset of mRNAs involved in cell proliferation. The polypeptide is Eukaryotic translation initiation factor 3 subunit M (Aspergillus oryzae (strain ATCC 42149 / RIB 40) (Yellow koji mold)).